The following is a 442-amino-acid chain: tRNA modification GTPase MnmE (442 aa).

3 residues coordinate (6S)-5-formyl-5,6,7,8-tetrahydrofolate: arginine 27, glutamate 84, and lysine 124. Residues 221 to 366 (GLHVVIVGAP…LLDALQAFAE (146 aa)) form the TrmE-type G domain. GTP is bound by residues 231–236 (NAGKSS), 250–256 (SEEAGTT), and 275–278 (DTAG). Residues serine 235 and threonine 256 each contribute to the Mg(2+) site. Lysine 442 provides a ligand contact to (6S)-5-formyl-5,6,7,8-tetrahydrofolate.

Belongs to the TRAFAC class TrmE-Era-EngA-EngB-Septin-like GTPase superfamily. TrmE GTPase family. Homodimer. Heterotetramer of two MnmE and two MnmG subunits. The cofactor is K(+).

It is found in the cytoplasm. Functionally, exhibits a very high intrinsic GTPase hydrolysis rate. Involved in the addition of a carboxymethylaminomethyl (cmnm) group at the wobble position (U34) of certain tRNAs, forming tRNA-cmnm(5)s(2)U34. In Brucella abortus (strain 2308), this protein is tRNA modification GTPase MnmE.